A 298-amino-acid polypeptide reads, in one-letter code: Heme A synthase (298 aa).

Residues 1–6 (MHRSLK) are Cytoplasmic-facing. A helical membrane pass occupies residues 7 to 27 (IFGTLTSIGMVIVLMQGALVT). Residues 28-62 (KTESGEGCGATWPLCFGEVIPTNPAIETIIEYSHR) are Extracellular-facing. Cys-35 and Cys-42 are joined by a disulfide. Glu-58 is an active-site residue. Residue His-61 coordinates heme o. Residues 63–83 (IVSGLLGAMVIILAIWAWRKL) form a helical membrane-spanning segment. The Cytoplasmic portion of the chain corresponds to 84 to 92 (SHIRETKVM). A helical membrane pass occupies residues 93-113 (AILAVLFIIFQGLLGAGAVVF). Residues 114 to 117 (GQSH) lie on the Extracellular side of the membrane. Residues 118–138 (AILALHFGISAISLATVVLLT) traverse the membrane as a helical segment. A heme o-binding site is contributed by His-123. At 139-158 (TLAFEDGKPNPPALIVKKGY) the chain is on the cytoplasmic side. Residues 159–179 (KGYILAVFAYCYAVIYTGAYV) traverse the membrane as a helical segment. Residues 180–209 (KHTQATLACGDFPLCNGQWIPMLSGPVGAH) lie on the Extracellular side of the membrane. The cysteines at positions 188 and 194 are disulfide-linked. Residues 210–230 (FFHRVAGTLLLILLVVALIWT) traverse the membrane as a helical segment. His-212 contributes to the heme b binding site. The Cytoplasmic portion of the chain corresponds to 231-244 (LRKYSHYRSLVWTH). A helical transmembrane segment spans residues 245–265 (ILCVILVLTQYATGISIVLTG). The Extracellular portion of the chain corresponds to 266–271 (NELFVA). A helical transmembrane segment spans residues 272–292 (MMHALIVSILFTTLCYIVMIL). Residue His-274 participates in heme b binding. Over 293–298 (SRNKAV) the chain is Cytoplasmic.

This sequence belongs to the COX15/CtaA family. Type 1 subfamily. In terms of assembly, interacts with CtaB. Heme b is required as a cofactor.

Its subcellular location is the cell membrane. It catalyses the reaction Fe(II)-heme o + 2 A + H2O = Fe(II)-heme a + 2 AH2. It participates in porphyrin-containing compound metabolism; heme A biosynthesis; heme A from heme O: step 1/1. Its function is as follows. Catalyzes the conversion of heme O to heme A by two successive hydroxylations of the methyl group at C8. The first hydroxylation forms heme I, the second hydroxylation results in an unstable dihydroxymethyl group, which spontaneously dehydrates, resulting in the formyl group of heme A. This is Heme A synthase from Halalkalibacterium halodurans (strain ATCC BAA-125 / DSM 18197 / FERM 7344 / JCM 9153 / C-125) (Bacillus halodurans).